The sequence spans 136 residues: Ribonuclease P protein component (136 aa).

This sequence belongs to the RnpA family. Consists of a catalytic RNA component (M1 or rnpB) and a protein subunit.

It carries out the reaction Endonucleolytic cleavage of RNA, removing 5'-extranucleotides from tRNA precursor.. Its function is as follows. RNaseP catalyzes the removal of the 5'-leader sequence from pre-tRNA to produce the mature 5'-terminus. It can also cleave other RNA substrates such as 4.5S RNA. The protein component plays an auxiliary but essential role in vivo by binding to the 5'-leader sequence and broadening the substrate specificity of the ribozyme. The protein is Ribonuclease P protein component of Arthrobacter sp. (strain FB24).